We begin with the raw amino-acid sequence, 493 residues long: (+)-menthofuran synthase (493 aa).

Position 1 (M1) is a topological domain, cytoplasmic. Residues 2 to 19 form a helical; Signal-anchor for type II membrane protein membrane-spanning segment; the sequence is AALLVFFSVSLILLAVLF. At 20 to 493 the chain is on the lumenal side; it reads HKRKSSLSSR…LLVLATPRQS (474 aa). N169 carries N-linked (GlcNAc...) asparagine glycosylation. C434 serves as a coordination point for heme.

It belongs to the cytochrome P450 family. Heme is required as a cofactor.

The protein localises to the membrane. It carries out the reaction (R)-pulegone + reduced [NADPH--hemoprotein reductase] + O2 = (R)-menthofuran + oxidized [NADPH--hemoprotein reductase] + 2 H2O + H(+). The protein operates within secondary metabolite biosynthesis; terpenoid biosynthesis. In terms of biological role, monoterpene synthase that catalyzes the formation of (+)-menthofuran from (+)-pulegone. The protein is (+)-menthofuran synthase of Mentha piperita (Peppermint).